A 147-amino-acid chain; its full sequence is Proteinase inhibitor type-2 T (147 aa).

The first 25 residues, 1 to 25 (MAVHKEVSFVAYLLIVLGMFLYVDA), serve as a signal peptide directing secretion. 2 tandem repeats follow at residues 25–82 (ALGC…PKNP) and 83–142 (KACP…EPKP). Intrachain disulfides connect cysteine 28-cysteine 116, cysteine 32-cysteine 112, cysteine 40-cysteine 122, cysteine 52-cysteine 89, cysteine 55-cysteine 73, cysteine 56-cysteine 85, cysteine 62-cysteine 98, and cysteine 115-cysteine 133.

This sequence belongs to the protease inhibitor I20 (potato type II proteinase inhibitor) family.

Its function is as follows. Inhibitor of trypsin and chymotrypsin. This Solanum tuberosum (Potato) protein is Proteinase inhibitor type-2 T (PIN2T).